The primary structure comprises 454 residues: UDP-N-acetylmuramoylalanine--D-glutamate ligase (454 aa).

Position 115 to 121 (115 to 121 (GTNGKTT)) interacts with ATP.

This sequence belongs to the MurCDEF family.

It is found in the cytoplasm. The enzyme catalyses UDP-N-acetyl-alpha-D-muramoyl-L-alanine + D-glutamate + ATP = UDP-N-acetyl-alpha-D-muramoyl-L-alanyl-D-glutamate + ADP + phosphate + H(+). It participates in cell wall biogenesis; peptidoglycan biosynthesis. In terms of biological role, cell wall formation. Catalyzes the addition of glutamate to the nucleotide precursor UDP-N-acetylmuramoyl-L-alanine (UMA). The sequence is that of UDP-N-acetylmuramoylalanine--D-glutamate ligase from Thermoanaerobacter sp. (strain X514).